A 387-amino-acid polypeptide reads, in one-letter code: Gamma-butyrobetaine dioxygenase (387 aa).

Zn(2+) is bound by residues Cys-38, Cys-40, Cys-43, and His-82. Fe cation is bound by residues His-202, Asp-204, and His-347. Ser-351 carries the post-translational modification Phosphoserine.

This sequence belongs to the gamma-BBH/TMLD family. Fe(2+) is required as a cofactor. L-ascorbate serves as cofactor. As to expression, highly expressed in kidney; moderately expressed in liver; very low expression in brain.

The protein resides in the cytoplasm. The enzyme catalyses 4-(trimethylamino)butanoate + 2-oxoglutarate + O2 = carnitine + succinate + CO2. The protein operates within amine and polyamine biosynthesis; carnitine biosynthesis. Catalyzes the formation of L-carnitine from gamma-butyrobetaine. This chain is Gamma-butyrobetaine dioxygenase (BBOX1), found in Homo sapiens (Human).